The primary structure comprises 492 residues: MAKFIMVVGTSSNSGKTVLVSGICRMLSNKGYKVAPFKSQNMSLNSRVSVEDGEIAVAQYTQAMAARAEPSVHFNPILLKPKGNFVSQVIVHGNPYEDKDYNEYRSKKDDFLVKIKESIDYLDKNYDYVVIEGAGSCCEINLLNDDIANLKVAEIAGADAILVSDIDRGGVFASIYGTVQLLPENWKKLLKGFVINKFRGNIDVLKDGFEKIEELTNIPVIGTIPYDETLVLPEEDSQALDGKRVFGNLKSPIEVNVVKFSKIANFTDVDPFSSDCLMKYIDFNENITGDILILPGTRCSTVEMDLMKKYGMDKKILEFVENGGIVLGICGGYQALGKMLFDEDFSEGDVGTISGLGLFDMETTFGNKKAIKNSTGKISIFNQNFDVSGYELHEGYSVSNETPLISLSKGFGNCGDSYDGSFKMIGDSYIFGTYFHGILENFEFRNYLVNLARSKKNLSKIEDDTYAELFNENMDKLSKIIEENLDFSKIIG.

The 193-residue stretch at 252–444 (PIEVNVVKFS…FHGILENFEF (193 aa)) folds into the GATase cobBQ-type domain. The active-site Nucleophile is Cys-330. His-436 is an active-site residue.

Belongs to the CobB/CobQ family. CobQ subfamily.

Its pathway is cofactor biosynthesis; adenosylcobalamin biosynthesis. Its function is as follows. Catalyzes amidations at positions B, D, E, and G on adenosylcobyrinic A,C-diamide. NH(2) groups are provided by glutamine, and one molecule of ATP is hydrogenolyzed for each amidation. In Methanococcus maripaludis (strain DSM 14266 / JCM 13030 / NBRC 101832 / S2 / LL), this protein is Probable cobyric acid synthase.